The sequence spans 361 residues: MHNLLENLRRRLLAQRTPEPLPPTSQGLARPSHDVVRGPCDADIPPDARNTMPEGITVEEALAVAELPQKHALDILATAQAIRSVHKGGPAALCGIVNAKSGRCPEDCAFCAQSSHHATGSPVHALLDAETLLRRAEELRQSGAERYGIVTSGTRLTVRELDTLCEAAVRIRRETGIALCGSLGQLTPDAAACLKEAGFSSYHHNLETSRSFFPAICSTHAYDDDIATVRAARAAGLRTCSGGIFGMGETDAQRIELSATLRELDVDSIPVNLLSPIPGTPLQHRPTMPPMRALVSIAIYRLMHPARDILVCGGREATLGPWQSWIFLAGANGMMVGNYLTTTGRDMADDLAMLATLGVRA.

The tract at residues 14–38 (AQRTPEPLPPTSQGLARPSHDVVRG) is disordered. One can recognise a Radical SAM core domain in the interval 86 to 315 (HKGGPAALCG…ARDILVCGGR (230 aa)). Residues cysteine 104, cysteine 108, and cysteine 111 each coordinate [4Fe-4S] cluster. The [2Fe-2S] cluster site is built by cysteine 180 and cysteine 240.

This sequence belongs to the radical SAM superfamily. Biotin synthase family. As to quaternary structure, homodimer. [4Fe-4S] cluster serves as cofactor. Requires [2Fe-2S] cluster as cofactor.

The catalysed reaction is (4R,5S)-dethiobiotin + (sulfur carrier)-SH + 2 reduced [2Fe-2S]-[ferredoxin] + 2 S-adenosyl-L-methionine = (sulfur carrier)-H + biotin + 2 5'-deoxyadenosine + 2 L-methionine + 2 oxidized [2Fe-2S]-[ferredoxin]. It participates in cofactor biosynthesis; biotin biosynthesis; biotin from 7,8-diaminononanoate: step 2/2. Its function is as follows. Catalyzes the conversion of dethiobiotin (DTB) to biotin by the insertion of a sulfur atom into dethiobiotin via a radical-based mechanism. This chain is Biotin synthase, found in Nitratidesulfovibrio vulgaris (strain DP4) (Desulfovibrio vulgaris).